A 61-amino-acid polypeptide reads, in one-letter code: Small ribosomal subunit protein uS14 (61 aa).

Zn(2+) is bound by residues C24, C27, C40, and C43.

It belongs to the universal ribosomal protein uS14 family. Zinc-binding uS14 subfamily. Part of the 30S ribosomal subunit. Contacts proteins S3 and S10. Zn(2+) serves as cofactor.

Binds 16S rRNA, required for the assembly of 30S particles and may also be responsible for determining the conformation of the 16S rRNA at the A site. The polypeptide is Small ribosomal subunit protein uS14 (Borrelia garinii subsp. bavariensis (strain ATCC BAA-2496 / DSM 23469 / PBi) (Borreliella bavariensis)).